Here is a 360-residue protein sequence, read N- to C-terminus: MKPSIVAKLEALHERHEEVQALLGDAATIADQDRFRALSREYAQLSDVSRCFTDWQQVQEDIETAQMMLDDPEMREMAQEELQEAKARAEEMEQQLQVLLLPKDPDDERNAFVEVRAGTGGDEAALFAGDLFRMYSRYAESRRWRVEIMSANEGEHGGYKEVIAKISGEGVYGRLKFESGGHRVQRVPATESQGRIHTSACTVAVMPEVPEAELPDINPGDLRIDTFRSSGAGGQHVNTTDSAIRITHLPTGIVVECQDERSQHKNKAKALSVLGSRIRAAEIAKRQQAEASTRRNLLGSGDRSDRNRTYNFPQGRVTDHRINLTIYRLDEIMEGKLDSLIEPIVQEYQADQLAALADQD.

Gln-235 carries the N5-methylglutamine modification. The segment at 285–313 (KRQQAEASTRRNLLGSGDRSDRNRTYNFP) is disordered.

Belongs to the prokaryotic/mitochondrial release factor family. Post-translationally, methylated by PrmC. Methylation increases the termination efficiency of RF1.

Its subcellular location is the cytoplasm. Peptide chain release factor 1 directs the termination of translation in response to the peptide chain termination codons UAG and UAA. This chain is Peptide chain release factor 1, found in Enterobacter sp. (strain 638).